Consider the following 387-residue polypeptide: S-adenosylmethionine synthase (387 aa).

Position 15 (histidine 15) interacts with ATP. Aspartate 17 lines the Mg(2+) pocket. Glutamate 43 contributes to the K(+) binding site. Residues glutamate 56 and glutamine 99 each contribute to the L-methionine site. Residues 99-109 are flexible loop; it reads QSPDIAQGVNA. Residues 166–168, 232–233, aspartate 241, 247–248, alanine 264, and lysine 268 each bind ATP; these read DAK, RF, and RK. Aspartate 241 provides a ligand contact to L-methionine. Position 272 (lysine 272) interacts with L-methionine.

Belongs to the AdoMet synthase family. Homotetramer; dimer of dimers. Mg(2+) is required as a cofactor. It depends on K(+) as a cofactor.

The protein resides in the cytoplasm. It carries out the reaction L-methionine + ATP + H2O = S-adenosyl-L-methionine + phosphate + diphosphate. The protein operates within amino-acid biosynthesis; S-adenosyl-L-methionine biosynthesis; S-adenosyl-L-methionine from L-methionine: step 1/1. In terms of biological role, catalyzes the formation of S-adenosylmethionine (AdoMet) from methionine and ATP. The overall synthetic reaction is composed of two sequential steps, AdoMet formation and the subsequent tripolyphosphate hydrolysis which occurs prior to release of AdoMet from the enzyme. The sequence is that of S-adenosylmethionine synthase from Dechloromonas aromatica (strain RCB).